A 1346-amino-acid polypeptide reads, in one-letter code: Adhesion G protein-coupled receptor A3 (1346 aa).

Residues 1-21 form the signal peptide; it reads MSVLCVLLLAFVLPLRGSSSA. Residues 18–45 form a disordered region; the sequence is SSSAGSTECKTYDERSRSAGKSSPSGAT. The Extracellular segment spans residues 22-739; that stretch reads GSTECKTYDE…NVFIFRPLHP (718 aa). LRR repeat units lie at residues 66 to 90, 91 to 114, 116 to 138, and 139 to 162; these read FPNRTVSLILSNNKIQELLNGSFVG, LSSLERLDIKNNIITHIEPGAFYG, FSLKRLDLSKNLIGCLHVDVFKG, and LTNLVKLNLSENKFSSLSQGIFDS. The 48-residue stretch at 176-223 folds into the LRRCT domain; the sequence is LLCDCNLQWLVVWIKEKAIGVKETRCSFPRSLQGQLITTLRAETLTCD. Residues 229–327 enclose the Ig-like domain; sequence PSFQMTPSQH…GNNTRTVHIV (99 aa). A disulfide bond links Cys251 and Cys311. 3 LRR repeats span residues 503-529, 574-600, and 611-632; these read LQRIALLRVSNGALAYSTNSPNIALEA, TSNLSALALKNTIVEASLQLPPTLFSS, and VYKLHLLAFRNGKLFPPTGNSS. Positions 563–728 constitute a GAIN-B domain; it reads PERQLSFKCN…AVLMDLNRTG (166 aa). Positions 679-728 are GPS; it reads PAFWNFSLQGGQGGWQSDGCRILHQDDNFTTVSCHSLNSYAVLMDLNRTG. Cysteines 698 and 712 form a disulfide. The helical transmembrane segment at 740–760 threads the bilayer; it reads VIYSTALVLVLCLLSVIVSYI. Topologically, residues 761 to 773 are cytoplasmic; sequence YHHKSVRISKKCW. A helical transmembrane segment spans residues 774 to 794; the sequence is HMLVNLCLHILLTCAVFVGGI. The Extracellular portion of the chain corresponds to 795–804; it reads NQTYNASVCQ. The helical transmembrane segment at 805 to 825 threads the bilayer; that stretch reads AMGIVLHYSTLATALWSGVTA. At 826 to 854 the chain is on the cytoplasmic side; it reads RNIYKQVTRKAKRYEELDEPPPPPRPMLR. Residues 855-875 traverse the membrane as a helical segment; sequence FYLIGGGIPIIVCGITAAANI. Over 876-897 the chain is Extracellular; sequence KNYGSQVNAPYCWMAWEPSLGA. The helical transmembrane segment at 898-918 threads the bilayer; sequence FYGPAAFIVFVDCMYFLSILI. Residues 919–977 lie on the Cytoplasmic side of the membrane; it reads QLRRHPERRFELKEQSEEQQHLSVTEATEITPVHLESSPTAQPVPMSALENEHTFVSQL. The chain crosses the membrane as a helical span at residues 978–998; it reads MGVAGSLTLYAALWVFGALAI. Topologically, residues 999 to 1005 are extracellular; it reads SQEHPAD. Residues 1006–1026 traverse the membrane as a helical segment; sequence LVFACLFGALALGLGAFLVAH. Residues 1027–1346 are Cytoplasmic-facing; sequence HCVNRQDMRR…TGLWKHETTV (320 aa). Over residues 1157 to 1169 the composition is skewed to polar residues; that stretch reads SVNNNNLPGNANI. 2 disordered regions span residues 1157–1188 and 1202–1284; these read SVNNNNLPGNANITGHPGRHHKNRSRAHRASR and SVEG…DGSE. Basic residues-rich tracts occupy residues 1173–1187 and 1212–1226; these read PGRHHKNRSRAHRAS and NKRHHHESLHARNSR. The segment covering 1238–1252 has biased composition (low complexity); it reads QSQLQQDSSDAASTS. Positions 1266-1280 are enriched in gly residues; sequence IGNGFGHGISNGGLL. Positions 1344-1346 match the PDZ-binding motif; the sequence is TTV.

The protein belongs to the G-protein coupled receptor 2 family. Adhesion G-protein coupled receptor (ADGR) subfamily. In terms of assembly, interacts (via PDZ-binding motif) with disheveled proteins; leading to the localization of dishevelled proteins to specific membrane subdomains. As to expression, ubiquitously expressed at very low levels.

It localises to the cell membrane. Orphan receptor that acts as a critical modulator of planar cell polarity during gastrulation. Controls the localization of dishevelled. This is Adhesion G protein-coupled receptor A3 (adgra3) from Danio rerio (Zebrafish).